The following is a 432-amino-acid chain: Amino-acid acetyltransferase (432 aa).

Residues 286-425 form the N-acetyltransferase domain; it reads EQLREAGIED…ASLYNFQRNS (140 aa).

Belongs to the acetyltransferase family. ArgA subfamily.

It is found in the cytoplasm. The enzyme catalyses L-glutamate + acetyl-CoA = N-acetyl-L-glutamate + CoA + H(+). It participates in amino-acid biosynthesis; L-arginine biosynthesis; N(2)-acetyl-L-ornithine from L-glutamate: step 1/4. This Pseudomonas paraeruginosa (strain DSM 24068 / PA7) (Pseudomonas aeruginosa (strain PA7)) protein is Amino-acid acetyltransferase.